Reading from the N-terminus, the 481-residue chain is Heat stress transcription factor A-1b (481 aa).

A compositionally biased stretch (low complexity) spans 1–16 (MESVPESVPSPNSNTP). The tract at residues 1–23 (MESVPESVPSPNSNTPSIPPPVN) is disordered. The DNA-binding element occupies 25–119 (VPPFLSKTYD…LLKSIVRRKP (95 aa)). Residues 138 to 204 (ACVEVGKFGI…QMMSFLAKAV (67 aa)) are hydrophobic repeat HR-A/B. Over residues 213–227 (LVQQNNNDGNRQIPG) the composition is skewed to polar residues. The interval 213–244 (LVQQNNNDGNRQIPGSNKKRRLPVDEQENRGD) is disordered. Positions 229 to 233 (NKKRR) match the Nuclear localization signal motif. Basic and acidic residues predominate over residues 234 to 243 (LPVDEQENRG). The AHA signature appears at 418–427 (DPFWEQFFSV). Residues 467–474 (LTEQMGLL) carry the Nuclear export signal motif.

The protein belongs to the HSF family. Class A subfamily. In terms of assembly, homotrimer. Binds to HSBP. Post-translationally, exhibits temperature-dependent phosphorylation.

It localises to the cytoplasm. The protein resides in the nucleus. Transcriptional activator that specifically binds DNA sequence 5'-AGAAnnTTCT-3' known as heat shock promoter elements (HSE). This is Heat stress transcription factor A-1b (HSFA1B) from Arabidopsis thaliana (Mouse-ear cress).